We begin with the raw amino-acid sequence, 449 residues long: Exodeoxyribonuclease 7 large subunit (449 aa).

This sequence belongs to the XseA family. As to quaternary structure, heterooligomer composed of large and small subunits.

The protein resides in the cytoplasm. It catalyses the reaction Exonucleolytic cleavage in either 5'- to 3'- or 3'- to 5'-direction to yield nucleoside 5'-phosphates.. In terms of biological role, bidirectionally degrades single-stranded DNA into large acid-insoluble oligonucleotides, which are then degraded further into small acid-soluble oligonucleotides. This is Exodeoxyribonuclease 7 large subunit from Aliivibrio fischeri (strain MJ11) (Vibrio fischeri).